We begin with the raw amino-acid sequence, 570 residues long: Phytoene desaturase (570 aa).

A helical membrane pass occupies residues leucine 547–isoleucine 567.

It belongs to the carotenoid/retinoid oxidoreductase family. NAD(+) serves as cofactor.

Its subcellular location is the membrane. The catalysed reaction is 15-cis-phytoene + A = all-trans-phytofluene + AH2. It carries out the reaction all-trans-phytofluene + A = all-trans-zeta-carotene + AH2. It catalyses the reaction all-trans-zeta-carotene + A = all-trans-neurosporene + AH2. The enzyme catalyses all-trans-neurosporene + A = all-trans-lycopene + AH2. It functions in the pathway carotenoid biosynthesis. In terms of biological role, phytoene desaturase; part of the car gene cluster that mediates the biosynthesis of neurosporaxanthin, a carboxylic apocarotenoid acting as an essential protective pigments and leading to orange pigmentation. Converts phytoene into lycopene via the intermediates phytofluene, zeta-carotene and neurosporene; and further desaturates gamma-carotene into torulene. Neurosporaxanthin is synthesized from geranyl-geranyl pyrophosphate (GGPP) through several enzymatic activities. Phytoene synthase activity performed by the bifunctional enzyme carAR first produces phytoene from geranyl-geranyl pyrophosphate (GGPP). The phytoene dehydrogenase carB then introduces 4 desaturations to lead to lycopene which is substrate of the carotene cyclase activity of carAR that leads to the production of gamma-carotene. CarB then performs a 5th desaturation reaction to yield torulene. Torulene is the substrate of the dioxidase carT that breaks the molecule, removing five carbon atoms to yield beta-apo-4'-carotenal, whereas the aldehyde dehydrogenase carD mediates the last step by converting beta-apo-4'-carotenal into neurosporaxanthin. The polypeptide is Phytoene desaturase (Fusarium fujikuroi (Bakanae and foot rot disease fungus)).